Here is a 576-residue protein sequence, read N- to C-terminus: Laccase-1 (576 aa).

The N-terminal stretch at Met1–Ala19 is a signal peptide. Plastocyanin-like domains are found at residues Thr21–Tyr145 and Val157–Glu304. A glycan (N-linked (GlcNAc...) asparagine) is linked at Asn41. Cu cation is bound by residues His82, His84, His127, and His129. Residues Cys103 and Cys562 are joined by a disulfide bond. Residues Asn182, Asn228, Asn294, and Asn368 are each glycosylated (N-linked (GlcNAc...) asparagine). One can recognise a Plastocyanin-like 3 domain in the interval Asp376–Leu576. Residues His471, His474, His476, His523, Cys524, His525, and His529 each coordinate Cu cation.

The protein belongs to the multicopper oxidase family. As to quaternary structure, homodimer. It depends on Cu cation as a cofactor. In mycelia, at a lower level than LCC4.

It is found in the secreted. It catalyses the reaction 4 hydroquinone + O2 = 4 benzosemiquinone + 2 H2O. Its function is as follows. Lignin degradation and detoxification of lignin-derived products. The sequence is that of Laccase-1 (LCC1) from Thanatephorus cucumeris (Black scurf of potato).